The sequence spans 142 residues: Holo-[acyl-carrier-protein] synthase (142 aa).

Mg(2+) is bound by residues D8 and E57.

It belongs to the P-Pant transferase superfamily. AcpS family. Requires Mg(2+) as cofactor.

It localises to the cytoplasm. It carries out the reaction apo-[ACP] + CoA = holo-[ACP] + adenosine 3',5'-bisphosphate + H(+). Functionally, transfers the 4'-phosphopantetheine moiety from coenzyme A to a Ser of acyl-carrier-protein. This chain is Holo-[acyl-carrier-protein] synthase, found in Ruegeria sp. (strain TM1040) (Silicibacter sp.).